Consider the following 284-residue polypeptide: Homeobox protein SMOX-5 (284 aa).

A DNA-binding region (homeobox) is located at residues 37–96; that stretch reads RRKTRTTFSNCQLNELENNFNRQRYLTPTDRDRIAKHLGLTNTQVITWFQNRRAKLKREA. The disordered stretch occupies residues 117–172; it reads LSLSDHDHEETQIDDENEQGDNNNDDDGDDNDVEEDDGEEQEKNHTKYLTQPPSIS. Acidic residues predominate over residues 128–156; the sequence is QIDDENEQGDNNNDDDGDDNDVEEDDGEE.

The protein resides in the nucleus. In Schistosoma mansoni (Blood fluke), this protein is Homeobox protein SMOX-5 (SMOX-5).